A 412-amino-acid polypeptide reads, in one-letter code: Yellow-related salivary protein LJM17 (412 aa).

A signal peptide spans 1–18 (MRFFFVFLAIVLFQGIHG). N-linked (GlcNAc...) asparagine glycosylation is present at asparagine 29.

The protein belongs to the major royal jelly protein family. In terms of tissue distribution, salivary gland.

The protein resides in the secreted. Functionally, probably modulates blood feeding of sand flies on vertebrate species by binding and sequestering different mediators involved in the host response. Binds biogenic amines. Binds serotonin with high affinity. Binds noradrenaline but not adrenaline. Binds dopamine and octopamine. Binds histamine. Inhibits host smooth muscle contraction induced by histamine in bioassay with guinea pig ileum. Immunogenic; elicits antibody production in the host. Functions as a chemoattractant for host neutrophils; likely acts through a G-protein-coupled receptor and effect is dependent on calcium influx. The polypeptide is Yellow-related salivary protein LJM17 (Lutzomyia longipalpis (Sand fly)).